The following is a 185-amino-acid chain: NOP protein chaperone 1 (185 aa).

3 positions are modified to phosphoserine: serine 34, serine 66, and serine 177. The interval 121-185 (SRSDSKEEDS…DSPASKKKKQ (65 aa)) is disordered.

Interacts with NOP58, RUVBL1 and RUVBL2; the interactions are direct and NOPCHAP1 bridges the association of NOP58 with RUVBL1:RUVBL2 even in absence of snoRNAs. The interactions with RUVBL1 and RUVBL2 are disrupted upon ATP binding.

Its subcellular location is the nucleus. Client-loading PAQosome/R2TP complex cofactor that selects NOP58 to promote box C/D small nucleolar ribonucleoprotein (snoRNP) assembly. Acts as a bridge between NOP58 and the R2TP complex via RUVBL1:RUVBL2. The protein is NOP protein chaperone 1 of Mus musculus (Mouse).